Reading from the N-terminus, the 330-residue chain is Transcription factor zip1 (330 aa).

Residues 133-148 (SKETQEKTSSQRELFE) are compositionally biased toward basic and acidic residues. Disordered stretches follow at residues 133–165 (SKET…SSSS) and 238–277 (PSLS…NTAA). A compositionally biased stretch (low complexity) spans 150-165 (KSSVASASKDNVSSSS). The segment covering 244–262 (KGAQSPNANSKRTKATSAI) has biased composition (polar residues). The bZIP domain maps to 264 to 327 (TAAEEDKRRR…NWLKGLIRPT (64 aa)). Residues 270-288 (KRRRNTAASARFRIKKKLK) form a basic motif region. A leucine-zipper region spans residues 292 to 320 (LERTAKELTEKVAILETRVRELEMENNWL).

Belongs to the bZIP family. In terms of assembly, interacts with pof1.

Its subcellular location is the nucleus. Mediates cell growth arrest in response to cadmium exposure, which is essential to maintain cell viability. Regulates cadmium stress specific genes. The protein is Transcription factor zip1 (zip1) of Schizosaccharomyces pombe (strain 972 / ATCC 24843) (Fission yeast).